Here is a 150-residue protein sequence, read N- to C-terminus: Ribosome maturation factor RimP (150 aa).

This sequence belongs to the RimP family.

Its subcellular location is the cytoplasm. Its function is as follows. Required for maturation of 30S ribosomal subunits. This Thermotoga petrophila (strain ATCC BAA-488 / DSM 13995 / JCM 10881 / RKU-1) protein is Ribosome maturation factor RimP.